Here is a 257-residue protein sequence, read N- to C-terminus: Hydroxyacylglutathione hydrolase (257 aa).

Zn(2+) contacts are provided by His-53, His-55, Asp-57, His-58, His-109, Asp-126, and His-164.

It belongs to the metallo-beta-lactamase superfamily. Glyoxalase II family. Monomer. Zn(2+) serves as cofactor.

The catalysed reaction is an S-(2-hydroxyacyl)glutathione + H2O = a 2-hydroxy carboxylate + glutathione + H(+). The protein operates within secondary metabolite metabolism; methylglyoxal degradation; (R)-lactate from methylglyoxal: step 2/2. Functionally, thiolesterase that catalyzes the hydrolysis of S-D-lactoyl-glutathione to form glutathione and D-lactic acid. This Baumannia cicadellinicola subsp. Homalodisca coagulata protein is Hydroxyacylglutathione hydrolase.